Consider the following 127-residue polypeptide: KP4 killer toxin (127 aa).

The N-terminal stretch at 1–22 (MQIINVVYSFLFAAAMLPVVHS) is a signal peptide. Intrachain disulfides connect cysteine 27-cysteine 100, cysteine 33-cysteine 103, cysteine 49-cysteine 89, cysteine 57-cysteine 82, and cysteine 66-cysteine 127.

In terms of assembly, monomer.

Its subcellular location is the secreted. Functionally, this protein is lethal to sensitive cells of the same or related species. It specifically inhibits voltage-gated calcium channels. It inhibits cell growth and division by blocking calcium import. The sequence is that of KP4 killer toxin (M2A) from Mycosarcoma maydis (Corn smut fungus).